The chain runs to 1074 residues: MAPGMSGRRGAALLCLSVLLAHAASRSHPASPSPPGTQASPILPVSYRLSHTRLAFFLKEARPLTPAAINGSLQRSEPFVVFQTKELPVLNVSLGPFSTSQVVARELLQPSSTLDIPERLTVNWKVRAFIVRARVPASQPVAQVLFYVAGRDWDDFGVTERLPCVRLHAFRDAREVRSSCRLGGALATCLVRAELPLAWFGPPAPAAPPSARRKSPDGLEPEAAAESQQVELYYTLHAPDASGGCGSARRGPGPGPGAAARAESPTQHPLLRIGSISLFRPPPRRAVQEHRLDSNLMIRLPDRPLRPGEVLSILLYLAPNSSSAASPSVEHFTLRVKAKKGVTLLGTKSRSGQWRVTSELLTGAKHSTATVDVAWALDTPLPPWEGQGPLEILQLDFEMENFTSQSVKRRIMWHIDYRGHSALPDLERAVTELTVIQRDVQAILPLAMDTEIINTAILTGRTVAIPVKVIAIEVTGLVLDVSDLVECQSHSEDIIKVSSSCDYVFVSGKESRGSMNARVTFRYDVLSAPLEMTVWVPKLPLHIELSDARLSQVKGWRVPILPDRRSARESEDEEEEEEERRQSANRGCTLQYQHATLQVFTQFHTTSSEGTDQVVTMLGPDWLVEVTDLVSDFMRVGDPRVAHLVDSNTLAGLEPGTTPFKVVSPLTEAVLGETLLTVTEEKVSITQLQAQVVASLTLSLRPSPGSSHTILATTAAQPTLSLVKQEALLSLWLSYSDGTTAPLSLYSSRDYGLLVSSLDERVATVTQDKAFPLVVAEAEGSGDLLRAELTISESCQKTKRKSVLATTPVSLRVHFGRDEEDPTYDYPGPSQPGPGGGEDEARGAGPPGTAIPAGEVPGLGTAGPVPPTEDYLPLPTGFLQMPRGLTDLEIGMYALLGVFCLAILVFLINCIVFVLRYRHKRIPPEGQTSMDHSHHWVFLGNGQPLRVQGELSPPAGSALETVPACCHGDHHSSGSSQTSVQSQVHGRGDGSSGGSARDQTEDPASSPTSKRKRVKFTTFTTLPTEELAYDSVPAGEEEDEEEDLGWGCPDVAGTTRPTPPPDLHNYMRRIKDIA.

The first 23 residues, 1-23, serve as a signal peptide directing secretion; it reads MAPGMSGRRGAALLCLSVLLAHA. Topologically, residues 26–894 are extracellular; it reads RSHPASPSPP…LTDLEIGMYA (869 aa). 2 N-linked (GlcNAc...) asparagine glycosylation sites follow: Asn-70 and Asn-91. 2 disordered regions span residues 205 to 224 and 243 to 266; these read PAAPPSARRKSPDGLEPEAA and GGCGSARRGPGPGPGAAARAESPT. Over residues 247–262 the composition is skewed to low complexity; sequence SARRGPGPGPGAAARA. Asn-320 and Asn-401 each carry an N-linked (GlcNAc...) asparagine glycan. Disordered regions lie at residues 564-587 and 816-867; these read RRSARESEDEEEEEEERRQSANRG and GRDE…PVPP. Residues 843–854 show a composition bias toward low complexity; sequence GAGPPGTAIPAG. A helical membrane pass occupies residues 895–915; it reads LLGVFCLAILVFLINCIVFVL. The Cytoplasmic portion of the chain corresponds to 916–1074; the sequence is RYRHKRIPPE…NYMRRIKDIA (159 aa). The interval 962 to 1064 is disordered; sequence VPACCHGDHH…TRPTPPPDLH (103 aa). Low complexity-rich tracts occupy residues 973–985 and 1016–1026; these read SGSSQTSVQSQVH and FTTFTTLPTEE. Over residues 1035-1044 the composition is skewed to acidic residues; the sequence is GEEEDEEEDL.

It belongs to the TMEM132 family. Widely expressed, with highest levels in the cochlea. In the cochlea, detected in spiral ganglion, the organ of Corti and stria vascularis. In the organ of Corti, prominently expressed in the outer and inner hair cells, especially at the apical and basal region of the outer hair cell body (at protein level).

Its subcellular location is the membrane. Its function is as follows. Required for normal inner ear hair cell function and hearing. This Mus musculus (Mouse) protein is Transmembrane protein 132E (Tmem132e).